Consider the following 355-residue polypeptide: Dihydroorotate dehydrogenase (quinone) (355 aa).

FMN is bound by residues 68-72 (AGFDK) and Thr-92. Lys-72 is a substrate binding site. 117-121 (NRMGF) is a binding site for substrate. Positions 154 and 190 each coordinate FMN. Substrate is bound at residue Asn-190. Ser-193 (nucleophile) is an active-site residue. Asn-195 contacts substrate. FMN-binding residues include Lys-232 and Thr-260. 261 to 262 (NT) provides a ligand contact to substrate. FMN contacts are provided by residues Gly-286, Gly-315, and 336 to 337 (YS).

Belongs to the dihydroorotate dehydrogenase family. Type 2 subfamily. In terms of assembly, monomer. FMN serves as cofactor.

It localises to the cell membrane. The catalysed reaction is (S)-dihydroorotate + a quinone = orotate + a quinol. It participates in pyrimidine metabolism; UMP biosynthesis via de novo pathway; orotate from (S)-dihydroorotate (quinone route): step 1/1. Catalyzes the conversion of dihydroorotate to orotate with quinone as electron acceptor. The polypeptide is Dihydroorotate dehydrogenase (quinone) (Nocardioides sp. (strain ATCC BAA-499 / JS614)).